The primary structure comprises 295 residues: uncharacterized protein (295 aa).

The Resolvase/invertase-type recombinase catalytic domain maps to 151 to 290 (RTAVCARLSS…RAVAAAARAG (140 aa)). The active-site O-(5'-phospho-DNA)-serine intermediate is S159.

This is an uncharacterized protein from Mycobacterium bovis (strain ATCC BAA-935 / AF2122/97).